The sequence spans 223 residues: Cytidylate kinase (223 aa).

ATP is bound at residue 10-18 (GPASSGKST).

Belongs to the cytidylate kinase family. Type 1 subfamily.

It localises to the cytoplasm. The enzyme catalyses CMP + ATP = CDP + ADP. It carries out the reaction dCMP + ATP = dCDP + ADP. This Streptococcus pneumoniae (strain Hungary19A-6) protein is Cytidylate kinase.